Reading from the N-terminus, the 213-residue chain is Redox-sensing transcriptional repressor Rex (213 aa).

Residues 18–57 constitute a DNA-binding region (H-T-H motif); the sequence is LYYRFVNTLKSKGIDRVNSKAISEGLNIDSATIRRDFSYF. 92–97 contacts NAD(+); sequence GVGNLG.

This sequence belongs to the transcriptional regulatory Rex family. As to quaternary structure, homodimer.

It localises to the cytoplasm. Its function is as follows. Modulates transcription in response to changes in cellular NADH/NAD(+) redox state. The polypeptide is Redox-sensing transcriptional repressor Rex (Staphylococcus saprophyticus subsp. saprophyticus (strain ATCC 15305 / DSM 20229 / NCIMB 8711 / NCTC 7292 / S-41)).